A 63-amino-acid chain; its full sequence is Large ribosomal subunit protein uL29 (63 aa).

This sequence belongs to the universal ribosomal protein uL29 family.

The protein is Large ribosomal subunit protein uL29 of Pseudoalteromonas atlantica (strain T6c / ATCC BAA-1087).